Consider the following 326-residue polypeptide: NAD-dependent protein deacylase SIR5 (326 aa).

Residues 1–26 (MRLLRPTPRLSSIFSSKTATSNLRFF) constitute a mitochondrion transit peptide. A Deacetylase sirtuin-type domain is found at 28-324 (AMAPHNDVGA…IGKLETDKKE (297 aa)). An NAD(+)-binding site is contributed by 53 to 72 (GAGLSASSGLPTFRGAGGLW). The substrate site is built by tyrosine 97 and arginine 100. Histidine 151 acts as the Proton acceptor in catalysis. Residues cysteine 159, cysteine 162, cysteine 211, and cysteine 214 each coordinate Zn(2+).

The protein belongs to the sirtuin family. Class I subfamily. As to quaternary structure, interacts with LAT1; the interaction is direct. Zn(2+) is required as a cofactor.

The protein resides in the mitochondrion. Its subcellular location is the cytoplasm. It is found in the cytosol. The protein localises to the nucleus. It localises to the chromosome. It catalyses the reaction N(6)-acetyl-L-lysyl-[protein] + NAD(+) + H2O = 2''-O-acetyl-ADP-D-ribose + nicotinamide + L-lysyl-[protein]. The enzyme catalyses N(6)-(2E)-butenoyl-L-lysyl-[protein] + H2O = (2E)-2-butenoate + L-lysyl-[protein]. Its function is as follows. NAD-dependent protein-lysine deacylase that decrotonylates the PDC (pyruvate dehydrogenase complex) subunit LAT1 at 'Lys-148' to inhibit PDC activity and consequently ATP production. Also decrotonylates histone H3 crotonylated at 'Lys-18' (H3K18cr), to repress the expression of genes involved in aerobic respiration. May also act as a NAD-dependent deacetylase. Does not mediate desuccinylation, demalonylation, or deglutarylation of LAT1. This chain is NAD-dependent protein deacylase SIR5, found in Fusarium oxysporum f. sp. lycopersici (strain 4287 / CBS 123668 / FGSC 9935 / NRRL 34936) (Fusarium vascular wilt of tomato).